The sequence spans 177 residues: ATP-dependent protease subunit HslV (177 aa).

Thr-7 is a catalytic residue. Ala-162, Cys-165, and Thr-168 together coordinate Na(+).

Belongs to the peptidase T1B family. HslV subfamily. As to quaternary structure, a double ring-shaped homohexamer of HslV is capped on each side by a ring-shaped HslU homohexamer. The assembly of the HslU/HslV complex is dependent on binding of ATP.

Its subcellular location is the cytoplasm. It catalyses the reaction ATP-dependent cleavage of peptide bonds with broad specificity.. With respect to regulation, allosterically activated by HslU binding. Its function is as follows. Protease subunit of a proteasome-like degradation complex believed to be a general protein degrading machinery. This chain is ATP-dependent protease subunit HslV, found in Thioalkalivibrio sulfidiphilus (strain HL-EbGR7).